A 157-amino-acid polypeptide reads, in one-letter code: MSRRHAAEKKVVPADPIYGSVTLERFINKVMMHGKKSIARKIVYSALERFAKKVGAENALEAFEEALENAKPLLEVRSRRVGGATYQVPVEVAAGRRDCLAMQWIIKFARAKPGKSMEVGLATELVDCFNKQGATIKKREDTHRMAEANKAFAHYKW.

Belongs to the universal ribosomal protein uS7 family. As to quaternary structure, part of the 30S ribosomal subunit. Contacts proteins S9 and S11.

Functionally, one of the primary rRNA binding proteins, it binds directly to 16S rRNA where it nucleates assembly of the head domain of the 30S subunit. Is located at the subunit interface close to the decoding center, probably blocks exit of the E-site tRNA. This chain is Small ribosomal subunit protein uS7, found in Chlamydia felis (strain Fe/C-56) (Chlamydophila felis).